A 376-amino-acid chain; its full sequence is Glucose-1-phosphate adenylyltransferase (376 aa).

Alpha-D-glucose 1-phosphate contacts are provided by residues Tyr-101, Gly-166, 181 to 182 (EK), and Ser-192.

It belongs to the bacterial/plant glucose-1-phosphate adenylyltransferase family. Homotetramer.

It catalyses the reaction alpha-D-glucose 1-phosphate + ATP + H(+) = ADP-alpha-D-glucose + diphosphate. It participates in glycan biosynthesis; glycogen biosynthesis. Its function is as follows. Involved in the biosynthesis of ADP-glucose, a building block required for the elongation reactions to produce glycogen. Catalyzes the reaction between ATP and alpha-D-glucose 1-phosphate (G1P) to produce pyrophosphate and ADP-Glc. This chain is Glucose-1-phosphate adenylyltransferase, found in Bacillus cereus (strain ATCC 14579 / DSM 31 / CCUG 7414 / JCM 2152 / NBRC 15305 / NCIMB 9373 / NCTC 2599 / NRRL B-3711).